The sequence spans 629 residues: Sushi domain-containing protein 5 (629 aa).

The N-terminal stretch at methionine 1 to arginine 35 is a signal peptide. Residues alanine 36–proline 574 are Extracellular-facing. In terms of domain architecture, Link spans lysine 39–lysine 134. 3 disulfides stabilise this stretch: cysteine 61/cysteine 132, cysteine 140/cysteine 184, and cysteine 167/cysteine 197. The Sushi domain maps to lysine 138–lysine 199. Residues glutamate 225–arginine 249 show a composition bias toward basic and acidic residues. 2 disordered regions span residues glutamate 225–serine 252 and aspartate 344–glutamate 403. Residues valine 575 to valine 595 traverse the membrane as a helical segment. The Cytoplasmic segment spans residues tryptophan 596–valine 629.

The protein resides in the membrane. The polypeptide is Sushi domain-containing protein 5 (SUSD5) (Homo sapiens (Human)).